The primary structure comprises 320 residues: Fructose-1,6-bisphosphatase class 1 (320 aa).

Mg(2+) contacts are provided by Glu105, Asp124, Leu126, and Asp127. Substrate is bound by residues 127–130 (DGSS), Tyr233, and Lys263. Residue Glu269 coordinates Mg(2+).

Belongs to the FBPase class 1 family. Homotetramer. Mg(2+) is required as a cofactor.

It is found in the cytoplasm. The enzyme catalyses beta-D-fructose 1,6-bisphosphate + H2O = beta-D-fructose 6-phosphate + phosphate. It participates in carbohydrate biosynthesis; gluconeogenesis. In Methanocorpusculum labreanum (strain ATCC 43576 / DSM 4855 / Z), this protein is Fructose-1,6-bisphosphatase class 1.